The chain runs to 446 residues: Tubulin beta chain (446 aa).

GTP-binding residues include Gln11, Glu69, Ser138, Gly142, Thr143, Gly144, Asn204, and Asn226. Glu69 provides a ligand contact to Mg(2+). The segment at Tyr422 to Glu446 is disordered. Residues Gly429–Glu446 are compositionally biased toward acidic residues.

This sequence belongs to the tubulin family. Dimer of alpha and beta chains. A typical microtubule is a hollow water-filled tube with an outer diameter of 25 nm and an inner diameter of 15 nM. Alpha-beta heterodimers associate head-to-tail to form protofilaments running lengthwise along the microtubule wall with the beta-tubulin subunit facing the microtubule plus end conferring a structural polarity. Microtubules usually have 13 protofilaments but different protofilament numbers can be found in some organisms and specialized cells. It depends on Mg(2+) as a cofactor.

It is found in the cytoplasm. The protein localises to the cytoskeleton. Functionally, tubulin is the major constituent of microtubules, a cylinder consisting of laterally associated linear protofilaments composed of alpha- and beta-tubulin heterodimers. Microtubules grow by the addition of GTP-tubulin dimers to the microtubule end, where a stabilizing cap forms. Below the cap, tubulin dimers are in GDP-bound state, owing to GTPase activity of alpha-tubulin. This Gibberella zeae (strain ATCC MYA-4620 / CBS 123657 / FGSC 9075 / NRRL 31084 / PH-1) (Wheat head blight fungus) protein is Tubulin beta chain (TUB2).